The following is a 589-amino-acid chain: Putative phospholipase B-like 2 (589 aa).

Residues 1-41 (MVAPMYGSPGGRLARAVTRALALALVLALLVGLFLSGLTGA) form the signal peptide. 2 N-linked (GlcNAc...) asparagine glycosylation sites follow: asparagine 88 and asparagine 110. A disulfide bridge connects residues cysteine 142 and cysteine 152. 4 N-linked (GlcNAc...) asparagine glycosylation sites follow: asparagine 174, asparagine 231, asparagine 436, and asparagine 465. The cysteines at positions 492 and 495 are disulfide-linked. Asparagine 515 carries N-linked (GlcNAc...) asparagine glycosylation.

Belongs to the phospholipase B-like family. In terms of assembly, interacts with IGF2R. Post-translationally, glycosylated; contains mannose 6-phosphate sugars.

It localises to the lysosome lumen. In terms of biological role, putative phospholipase. In Bos taurus (Bovine), this protein is Putative phospholipase B-like 2 (PLBD2).